We begin with the raw amino-acid sequence, 398 residues long: Dihydrolipoyllysine-residue succinyltransferase component of 2-oxoglutarate dehydrogenase complex (398 aa).

Residues 2-77 (SIKIIIPSLG…TVGEEVGEIN (76 aa)) form the Lipoyl-binding domain. Lys-43 is modified (N6-lipoyllysine). Residues 112 to 149 (ILAPSVQKLVTENKLDPNNIKGTGRGGRITKYDVLETI) enclose the Peripheral subunit-binding (PSBD) domain. Active-site residues include His-369 and Asp-373.

The protein belongs to the 2-oxoacid dehydrogenase family. In terms of assembly, forms a 24-polypeptide structural core with octahedral symmetry. Part of the 2-oxoglutarate dehydrogenase (OGDH) complex composed of E1 (2-oxoglutarate dehydrogenase), E2 (dihydrolipoamide succinyltransferase) and E3 (dihydrolipoamide dehydrogenase); the complex contains multiple copies of the three enzymatic components (E1, E2 and E3). (R)-lipoate is required as a cofactor.

The enzyme catalyses N(6)-[(R)-dihydrolipoyl]-L-lysyl-[protein] + succinyl-CoA = N(6)-[(R)-S(8)-succinyldihydrolipoyl]-L-lysyl-[protein] + CoA. It functions in the pathway amino-acid degradation; L-lysine degradation via saccharopine pathway; glutaryl-CoA from L-lysine: step 6/6. In terms of biological role, E2 component of the 2-oxoglutarate dehydrogenase (OGDH) complex which catalyzes the second step in the conversion of 2-oxoglutarate to succinyl-CoA and CO(2). This Rickettsia typhi (strain ATCC VR-144 / Wilmington) protein is Dihydrolipoyllysine-residue succinyltransferase component of 2-oxoglutarate dehydrogenase complex (sucB).